We begin with the raw amino-acid sequence, 397 residues long: GPI mannosyltransferase 1 (397 aa).

A run of 9 helical transmembrane segments spans residues 5 to 25 (ECLLVLAGLLARVGFFSYGIY), 79 to 99 (WVHFGKFIFVLFDLLAGVMVM), 111 to 128 (LILASLWLLNPVVITVST), 156 to 176 (GFVYGVAIHFKIYPIIYALPI), 193 to 213 (LTMGIATLATLVGCGIGMYYI), 257 to 277 (WAEFAFLPQLFICAAVTYVLW), 307 to 327 (YFIWYLLFLPSFLLDTTLSGA), 330 to 350 (IFLIFLWVGTQAWWLYNGYLL), and 362 to 382 (LFSACVTFFLANVYLLAQFIL).

Belongs to the PIGM family.

The protein resides in the endoplasmic reticulum membrane. The protein operates within glycolipid biosynthesis; glycosylphosphatidylinositol-anchor biosynthesis. Mannosyltransferase involved in glycosylphosphatidylinositol-anchor biosynthesis. Transfers the first alpha-1,4-mannose to GlcN-acyl-PI during GPI precursor assembly. Required for cell wall integrity. The polypeptide is GPI mannosyltransferase 1 (GPI14) (Eremothecium gossypii (strain ATCC 10895 / CBS 109.51 / FGSC 9923 / NRRL Y-1056) (Yeast)).